The sequence spans 407 residues: Dual-specificity RNA methyltransferase RlmN (407 aa).

The Proton acceptor role is filled by E136. The Radical SAM core domain occupies 144–378; sequence REDRGAVCIS…MDAGFASPIR (235 aa). A disulfide bridge connects residues C151 and C389. Residues C158, C162, and C165 each coordinate [4Fe-4S] cluster. S-adenosyl-L-methionine is bound by residues 215 to 216, S247, 269 to 271, and N346; these read GE and SLH. C389 functions as the S-methylcysteine intermediate in the catalytic mechanism.

This sequence belongs to the radical SAM superfamily. RlmN family. The cofactor is [4Fe-4S] cluster.

The protein localises to the cytoplasm. The catalysed reaction is adenosine(2503) in 23S rRNA + 2 reduced [2Fe-2S]-[ferredoxin] + 2 S-adenosyl-L-methionine = 2-methyladenosine(2503) in 23S rRNA + 5'-deoxyadenosine + L-methionine + 2 oxidized [2Fe-2S]-[ferredoxin] + S-adenosyl-L-homocysteine. It catalyses the reaction adenosine(37) in tRNA + 2 reduced [2Fe-2S]-[ferredoxin] + 2 S-adenosyl-L-methionine = 2-methyladenosine(37) in tRNA + 5'-deoxyadenosine + L-methionine + 2 oxidized [2Fe-2S]-[ferredoxin] + S-adenosyl-L-homocysteine. Specifically methylates position 2 of adenine 2503 in 23S rRNA and position 2 of adenine 37 in tRNAs. m2A2503 modification seems to play a crucial role in the proofreading step occurring at the peptidyl transferase center and thus would serve to optimize ribosomal fidelity. This is Dual-specificity RNA methyltransferase RlmN from Gluconobacter oxydans (strain 621H) (Gluconobacter suboxydans).